The following is a 396-amino-acid chain: Acetate kinase (396 aa).

N7 serves as a coordination point for Mg(2+). K14 is a binding site for ATP. R88 provides a ligand contact to substrate. D145 functions as the Proton donor/acceptor in the catalytic mechanism. ATP-binding positions include 205–209, 279–281, and 327–331; these read HLGNG, DFR, and GIGEN. A Mg(2+)-binding site is contributed by E381.

The protein belongs to the acetokinase family. As to quaternary structure, homodimer. It depends on Mg(2+) as a cofactor. The cofactor is Mn(2+).

The protein localises to the cytoplasm. The enzyme catalyses acetate + ATP = acetyl phosphate + ADP. The protein operates within metabolic intermediate biosynthesis; acetyl-CoA biosynthesis; acetyl-CoA from acetate: step 1/2. Functionally, catalyzes the formation of acetyl phosphate from acetate and ATP. Can also catalyze the reverse reaction. In Campylobacter jejuni subsp. doylei (strain ATCC BAA-1458 / RM4099 / 269.97), this protein is Acetate kinase.